A 443-amino-acid polypeptide reads, in one-letter code: UDP-N-acetylglucosamine 1-carboxyvinyltransferase 1 (443 aa).

Phosphoenolpyruvate is bound at residue K22 to N23. R95 lines the UDP-N-acetyl-alpha-D-glucosamine pocket. C119 (proton donor) is an active-site residue. A 2-(S-cysteinyl)pyruvic acid O-phosphothioketal modification is found at C119. Residues R124–L128, D308, and V330 contribute to the UDP-N-acetyl-alpha-D-glucosamine site.

Belongs to the EPSP synthase family. MurA subfamily.

The protein localises to the cytoplasm. The catalysed reaction is phosphoenolpyruvate + UDP-N-acetyl-alpha-D-glucosamine = UDP-N-acetyl-3-O-(1-carboxyvinyl)-alpha-D-glucosamine + phosphate. The protein operates within cell wall biogenesis; peptidoglycan biosynthesis. In terms of biological role, cell wall formation. Adds enolpyruvyl to UDP-N-acetylglucosamine. The polypeptide is UDP-N-acetylglucosamine 1-carboxyvinyltransferase 1 (Oceanobacillus iheyensis (strain DSM 14371 / CIP 107618 / JCM 11309 / KCTC 3954 / HTE831)).